Reading from the N-terminus, the 353-residue chain is MAANTPHDPSSPGHVPVMRQRMVELVGIGVTAGSAPAQPIIVDGTLGAGGHTEAFLEAYPNAIVIGLDRDPNALAEARARLERFGQRFFSYQTRFDGIGEALEHFSEDPDFPVDIREQGISGFLFDLGVSSMQLDQEDRGFAYRVDAPLDMRMDPSSRLTAAEILNTYEHGELARILKRYGDEKFAGKIASAVIREREKQPFENSARLVDLLYATIPAAARRTGGHPAKRTFQALRIEVNAELESLELVIPAAFSWLRVDGAGVFMSYQSLEDKIVKQQLKGMTESSTPPGLPVELPGTEPEFELLTRGAEKASEQEIAENSRSAPVRVRAARRIGAHASGAGGPRYPLVSTH.

Residues 49–51 (GGH), Asp-68, Phe-95, Asp-126, and Gln-133 each bind S-adenosyl-L-methionine.

This sequence belongs to the methyltransferase superfamily. RsmH family.

It localises to the cytoplasm. It catalyses the reaction cytidine(1402) in 16S rRNA + S-adenosyl-L-methionine = N(4)-methylcytidine(1402) in 16S rRNA + S-adenosyl-L-homocysteine + H(+). Specifically methylates the N4 position of cytidine in position 1402 (C1402) of 16S rRNA. This is Ribosomal RNA small subunit methyltransferase H from Corynebacterium urealyticum (strain ATCC 43042 / DSM 7109).